Consider the following 43-residue polypeptide: uncharacterized protein (43 aa).

Positions 1-37 (MIIKNNNNNNNNNNNNNNNNNNNNNNNNNNNNNNNNN) are enriched in low complexity. The disordered stretch occupies residues 1–43 (MIIKNNNNNNNNNNNNNNNNNNNNNNNNNNNNNNNNNIEIIIK).

This is an uncharacterized protein from Dictyostelium discoideum (Social amoeba).